Here is a 548-residue protein sequence, read N- to C-terminus: Glucose-6-phosphate isomerase 1 (548 aa).

The Proton donor role is filled by E353. Active-site residues include H384 and K512.

It belongs to the GPI family.

It localises to the cytoplasm. It catalyses the reaction alpha-D-glucose 6-phosphate = beta-D-fructose 6-phosphate. The protein operates within carbohydrate biosynthesis; gluconeogenesis. It functions in the pathway carbohydrate degradation; glycolysis; D-glyceraldehyde 3-phosphate and glycerone phosphate from D-glucose: step 2/4. Catalyzes the reversible isomerization of glucose-6-phosphate to fructose-6-phosphate. The sequence is that of Glucose-6-phosphate isomerase 1 from Neisseria gonorrhoeae (strain ATCC 700825 / FA 1090).